The chain runs to 929 residues: Chaperone protein ClpC1, chloroplastic (929 aa).

A chloroplast-targeting transit peptide spans 1–38 (MAMATRVLAQSTPPSLACYQRNVPSRGSGRSRRSVKMM). Positions 95–237 (FERFTEKAIK…RTQVIRMVGE (143 aa)) constitute a Clp R domain. Repeat stretches follow at residues 98–163 (FTEK…IGRG) and 173–237 (FTPR…MVGE). Residues 257–504 (LEEYGTNLTK…RVRLRHAQVP (248 aa)) form an i region. An ATP-binding site is contributed by 302–309 (GEPGVGKT). In terms of domain architecture, UVR spans 511-546 (EKELRQITKEKNEAVRGQDFEKAGTLRDREIELRAE). A disordered region spans residues 552-571 (AKGKEMSKAESETGEEGPMV). Positions 553-562 (KGKEMSKAES) are enriched in basic and acidic residues. An II region spans residues 571-762 (VTESDIQHIV…LLIMTSNVGS (192 aa)). 645 to 652 (GPTGVGKS) is an ATP binding site. The span at 908–919 (LNGGSGTPTTSL) shows a compositional bias: polar residues. The disordered stretch occupies residues 908–929 (LNGGSGTPTTSLEEQEDSLPVA). The span at 920–929 (EEQEDSLPVA) shows a compositional bias: acidic residues.

The protein belongs to the ClpA/ClpB family. ClpC subfamily. In terms of assembly, homodimer. May form hexamer and interact with Clp core. Interacts (via N-terminus) with CLPS1. Interacts with CLPF. In terms of tissue distribution, highly expressed in rosette leaves. Expressed in roots, stems and inflorescences. Expressed in photosynthetic green tissues with high levels in young, developing leaf tissues.

Its subcellular location is the plastid. The protein resides in the chloroplast stroma. It is found in the chloroplast membrane. Molecular chaperone that hydrolyzes ATP and is associated with the chloroplast protein import apparatus. May function as the motor for chloroplast protein translocation, as translocation requires ATP hydrolysis in the stroma. May interact with a ClpP-like protease involved in degradation of denatured proteins in the chloroplast. Involved in the regulation of chlorophyll b biosynthesis through the destabilization of chlorophyllide a oxygenase (CAO) protein in response to the accumulation of chlorophyll b. Involved in leaf iron homeostasis. This chain is Chaperone protein ClpC1, chloroplastic, found in Arabidopsis thaliana (Mouse-ear cress).